The following is a 319-amino-acid chain: Taste receptor type 2 member 14 (319 aa).

Residues 1-7 (MDGVIKS) are Extracellular-facing. The chain crosses the membrane as a helical span at residues 8-28 (IFTFILILEFIIGNLGNSFIV). Topologically, residues 29 to 55 (LVNCIDWVKRRKISLVDQLLIALAISR) are cytoplasmic. Residues 56–76 (ISLVWSIFGSWCVSVVFPALF) traverse the membrane as a helical segment. The Extracellular segment spans residues 77 to 87 (ATEKLLRMLTN). Positions 86 and 89 each coordinate cholesterol. Residues 88 to 108 (IWTVTNHFSVWLATILGTFYF) form a helical membrane-spanning segment. At 109-129 (LKIANFSNSIFLYLKWRVKKV) the chain is on the cytoplasmic side. The chain crosses the membrane as a helical span at residues 130–150 (VLVLLLVTLVLLFLNILLINI). Topologically, residues 151-184 (HINASINGYRGNMTCSSASCNFIRFSSAIALTST) are extracellular. N-linked (GlcNAc...) asparagine glycosylation is found at Asn153 and Asn162. Ala180 is a binding site for cholesterol. Residues 185–205 (VFILIPFTLSLATFLLLSFSL) traverse the membrane as a helical segment. The Cytoplasmic portion of the chain corresponds to 206–232 (WKHRKKMQHTVKGYRDVSTKAHRGVMQ). Residues 233-253 (TVITFLLLYAVFFLTFFVSIW) traverse the membrane as a helical segment. At 254-261 (ISERLKEN) the chain is on the extracellular side. The chain crosses the membrane as a helical span at residues 262–282 (QIIILSEMMGLAYPSGHSCVL). Residues Ile265 and Glu268 each contribute to the cholesterol site. Over 283–317 (ILGNKKLRQASLSVLWWLRYRFKDGELSGHKEFRE) the chain is Cytoplasmic.

Belongs to the G-protein coupled receptor T2R family. In terms of assembly, core component of the TAS2R14-GNAI1 complex, consisting of TAS2R14, GNAI1, GNB1 and GNG2; within the complex interacts with GNAI1. Core component of the TAS2R14-GNAT3 complex, consisting of TAS2R14, GNAT3, GNB1 and GNG2; within the complex interacts with GNAT3. Core component of the TAS2R14-GNAS2 complex, consisting of TAS2R14, GNAS2, GNB1 and GNG2; within the complex interacts with GNAS2.

It localises to the membrane. The catalysed reaction is Ca(2+)(in) = Ca(2+)(out). It carries out the reaction 3',5'-cyclic AMP(in) = 3',5'-cyclic AMP(out). With respect to regulation, basal activity is enhanced by binding to bitter tastants, such as flufenamic acid and aristolochic acid. Regulated by cholesterol in a concentration-dependent manner. In terms of biological role, gustducin-linked G-protein coupled receptor that plays a role in the perception of bitterness. The activity of this receptor stimulates GNAT3, activating the gustducin G-protein pathway. Likely plays a role in sensing the chemical composition of the gastrointestinal content and other extra-oral tissues via the inhibitory G-protein pathways. The sequence is that of Taste receptor type 2 member 14 (TAS2R14) from Papio hamadryas (Hamadryas baboon).